A 581-amino-acid polypeptide reads, in one-letter code: Semenogelin-2 (581 aa).

Residues 1–23 (MKSIILFVLSLLLILEKQAAVMG) form the signal peptide. Disordered regions lie at residues 24–62 (QKGG…SKGS), 132–157 (GGKA…GISS), 173–194 (KEQA…QSSY), and 271–581 (NLNQ…PIST). Composition is skewed to polar residues over residues 138 to 157 (GTQN…GISS) and 174 to 194 (EQAS…QSSY). Basic and acidic residues predominate over residues 291 to 310 (HTEERQLNHGEKSVQKDISK). Residues 324–333 (KSQNQVTIHS) are compositionally biased toward polar residues. Over residues 334–344 (QDQEHGHKENK) the composition is skewed to basic and acidic residues. Positions 366–396 (KSVSKGSISIQTEEQIHGKSQNQVRIPSQAQ) are enriched in polar residues. Composition is skewed to basic and acidic residues over residues 412 to 425 (TEER…KDIQ) and 455 to 464 (DQEHGHKENK). Polar residues-rich tracts occupy residues 481-497 (GKNT…SFQT) and 505-529 (SQIQ…SGQS). Basic and acidic residues-rich tracts occupy residues 530 to 545 (ADRE…KGRY) and 558 to 581 (TEHE…PIST).

The protein belongs to the semenogelin family. As to quaternary structure, interacts with SERPINA5.

Its subcellular location is the secreted. Its function is as follows. Participates in the formation of a gel matrix (sperm coagulum) entrapping the accessory gland secretions and ejaculated spermatozoa. In Pongo abelii (Sumatran orangutan), this protein is Semenogelin-2 (SEMG2).